Reading from the N-terminus, the 401-residue chain is Protein nanos (401 aa).

A disordered region spans residues 181 to 207 (LGRMSYGSAPPQVQMPPQQQHQQQQGL). Over residues 190–205 (PPQVQMPPQQQHQQQQ) the composition is skewed to low complexity. The segment at 318–372 (HCVFCENNNEPEAVINSHSVRDNFNRVLCPKLRTYVCPICGASGDSAHTIKYCPK) adopts a Nanos-type zinc-finger fold. Positions 319, 322, 335, 346, 354, 357, 365, and 370 each coordinate Zn(2+). Short sequence motifs (C2HC) lie at residues 319-346 (CVFCENNNEPEAVINSHSVRDNFNRVLC) and 354-370 (CPICGASGDSAHTIKYC).

The protein belongs to the nanos family. As to quaternary structure, interacts with pum and brat. Interacts with cup. Interacts with mei-P26; possibly involved in regulation of brat levels. Interacts with wh; may be involved in mei-P26-dependent derepression of the BMP signaling pathway. Acts via the formation of a quaternary complex composed of pum, nanos, brat and the 3'-UTR mRNA of hb. Binds RNA with no specificity. Posterior part of the embryo. While the transcript is present throughout the embryo, nanos translation is controlled by smg, and the protein is found in pole plasm and pole cells. In the female ovary expressed in germline stem cells, precystoblasts and in maturing cystoblasts; in early cystoblasts expression is post-transcriptionally repressed by bam in a 3'UTR-dependent manner.

Its subcellular location is the cytoplasm. It localises to the cytoplasmic ribonucleoprotein granule. In terms of biological role, maternal RNA-binding protein that is required for germ cells proliferation and self-renewal. Acts by forming a complex with pum and brat that regulates translation and mRNA stability. The complex binds to the Nanos Response Element (NRE), a 16 bp sequence in the hb mRNA 3'-UTR and prevents its translation. Controls posterior development. Rescuing factor for the abdominal defect of posterior group mutants. The other posterior group genes are not required for nanos function but rather play a role in localization or distribution of nanos protein. This chain is Protein nanos, found in Drosophila melanogaster (Fruit fly).